We begin with the raw amino-acid sequence, 355 residues long: UDP-N-acetylglucosamine--N-acetylmuramyl-(pentapeptide) pyrophosphoryl-undecaprenol N-acetylglucosamine transferase (355 aa).

Residues 15-17, N127, R163, S191, I244, 263-268, and Q288 contribute to the UDP-N-acetyl-alpha-D-glucosamine site; these read TGG and ALTVSE.

It belongs to the glycosyltransferase 28 family. MurG subfamily.

It is found in the cell inner membrane. It carries out the reaction di-trans,octa-cis-undecaprenyl diphospho-N-acetyl-alpha-D-muramoyl-L-alanyl-D-glutamyl-meso-2,6-diaminopimeloyl-D-alanyl-D-alanine + UDP-N-acetyl-alpha-D-glucosamine = di-trans,octa-cis-undecaprenyl diphospho-[N-acetyl-alpha-D-glucosaminyl-(1-&gt;4)]-N-acetyl-alpha-D-muramoyl-L-alanyl-D-glutamyl-meso-2,6-diaminopimeloyl-D-alanyl-D-alanine + UDP + H(+). It participates in cell wall biogenesis; peptidoglycan biosynthesis. Its function is as follows. Cell wall formation. Catalyzes the transfer of a GlcNAc subunit on undecaprenyl-pyrophosphoryl-MurNAc-pentapeptide (lipid intermediate I) to form undecaprenyl-pyrophosphoryl-MurNAc-(pentapeptide)GlcNAc (lipid intermediate II). The polypeptide is UDP-N-acetylglucosamine--N-acetylmuramyl-(pentapeptide) pyrophosphoryl-undecaprenol N-acetylglucosamine transferase (Salmonella dublin (strain CT_02021853)).